The chain runs to 433 residues: Homogentisate 1,2-dioxygenase (433 aa).

Residue His288 is the Proton acceptor of the active site. 2 residues coordinate Fe cation: His331 and Glu337. Homogentisate-binding residues include Tyr346 and His367. His367 is a binding site for Fe cation.

It belongs to the homogentisate dioxygenase family. In terms of assembly, hexamer; dimer of trimers. Requires Fe cation as cofactor.

It catalyses the reaction homogentisate + O2 = 4-maleylacetoacetate + H(+). It participates in amino-acid degradation; L-phenylalanine degradation; acetoacetate and fumarate from L-phenylalanine: step 4/6. In terms of biological role, involved in the catabolism of homogentisate (2,5-dihydroxyphenylacetate or 2,5-OH-PhAc), a central intermediate in the degradation of phenylalanine and tyrosine. Catalyzes the oxidative ring cleavage of the ar omatic ring of 2,5-dihydroxyphenylacetate to yield maleylacetoacetate. This chain is Homogentisate 1,2-dioxygenase, found in Pseudomonas putida (strain ATCC 47054 / DSM 6125 / CFBP 8728 / NCIMB 11950 / KT2440).